Consider the following 458-residue polypeptide: Sugar transporter ERD6-like 10 (458 aa).

A run of 12 helical transmembrane segments spans residues 17-37 (ITAC…SYGC), 66-86 (FLNL…VILG), 96-116 (LFCI…WLDL), 119-139 (ISLG…IAEI), 150-170 (ASTL…GTVI), 174-194 (VLAV…YFIP), 257-277 (LVVG…GITY), 292-312 (LGSM…LILV), 319-339 (PLLL…GVSF), 350-370 (FIPV…AIGI), 393-413 (IVAL…NFMF), and 419-439 (GTFY…WMLV).

This sequence belongs to the major facilitator superfamily. Sugar transporter (TC 2.A.1.1) family.

It is found in the membrane. Its function is as follows. Sugar transporter. The chain is Sugar transporter ERD6-like 10 from Arabidopsis thaliana (Mouse-ear cress).